Reading from the N-terminus, the 163-residue chain is Photosystem II extrinsic protein V (163 aa).

The first 26 residues, 1-26 (MLKRSSWLATLLGLLTVASVSTIVYA), serve as a signal peptide directing secretion. Heme c is bound by residues cysteine 63, cysteine 66, histidine 67, and histidine 118.

The protein belongs to the cytochrome c family. PsbV subfamily. In terms of assembly, PSII is composed of 1 copy each of membrane proteins PsbA, PsbB, PsbC, PsbD, PsbE, PsbF, PsbH, PsbI, PsbJ, PsbK, PsbL, PsbM, PsbT, PsbY, PsbZ, Psb30/Ycf12, at least 3 peripheral proteins of the oxygen-evolving complex and a large number of cofactors. It forms dimeric complexes. The extrinsic subunits in red algae are PsbO (OEC33), PsbQ', cytochrome c-550 and PsbU. Requires heme c as cofactor.

The protein localises to the plastid. It is found in the chloroplast thylakoid membrane. Its function is as follows. One of the extrinsic, lumenal subunits of photosystem II (PSII). PSII is a light-driven water plastoquinone oxidoreductase, using light energy to abstract electrons from H(2)O, generating a proton gradient subsequently used for ATP formation. The extrinsic proteins stabilize the structure of photosystem II oxygen-evolving complex (OEC), the ion environment of oxygen evolution and protect the OEC against heat-induced inactivation. This Porphyra purpurea (Red seaweed) protein is Photosystem II extrinsic protein V.